The sequence spans 401 residues: Proline-rich protein 30 (401 aa).

Residues 69–80 (PGPHFSSDSNSD) show a composition bias toward polar residues. 3 disordered regions span residues 69–93 (PGPH…PRSS), 129–191 (SSSL…RGAG), and 357–401 (QSPK…KSPS). Low complexity-rich tracts occupy residues 83 to 93 (PPHSSSHPRSS) and 129 to 147 (SSSL…QSPS). Composition is skewed to polar residues over residues 148–186 (RLQD…SIKS) and 357–368 (QSPKPSQCSRSL).

In Mus musculus (Mouse), this protein is Proline-rich protein 30 (Prr30).